A 982-amino-acid polypeptide reads, in one-letter code: ATP-dependent DNA helicase Q5 (982 aa).

In terms of domain architecture, Helicase ATP-binding spans 39–213 (MAVVKGAEDV…FAALHLKQPV (175 aa)). Position 52–59 (52–59 (MPTGAGKS)) interacts with ATP. Residues 157–160 (DEAH) carry the DEAH box motif. The Helicase C-terminal domain occupies 241–398 (NLRDFCLKAL…NKPSDKATLL (158 aa)). C412, C428, C432, and C435 together coordinate Zn(2+). A phosphoserine mark is found at S489 and S492. Residues 491–621 (GSGDEGRDEA…ASKDGQLYDM (131 aa)) are interaction with POLR2A. T527 bears the Phosphothreonine mark. The interaction with RAD51 stretch occupies residues 653-726 (PKRVGAGFSK…ALGSSVNCGD (74 aa)). Disordered stretches follow at residues 675–797 (GKSH…PGKC) and 812–893 (QTEG…AQEP). S728 is modified (phosphoserine; by CDK1).

It belongs to the helicase family. RecQ subfamily. Monomer. Interacts with TOP2A, TOP3A and TOP3B. Interacts with RNA polymerase II subunit POLR2A. Identified in a complex with the RNA polymerase II core bound to DNA. Interacts with RAD51. Interacts with WRN; this interaction stimulates WRN helicase activity on DNA fork duplexes. Interacts with MUS1; this interaction promotes MUS81-dependent mitotic DNA synthesis. Requires Zn(2+) as cofactor. In terms of processing, phosphorylated by CDK1 at Ser-728; this phosphorylation is required for RECQL5-mediated disruption of RAD51 filaments on stalled replication forks.

It localises to the nucleus. Its subcellular location is the nucleoplasm. It catalyses the reaction Couples ATP hydrolysis with the unwinding of duplex DNA by translocating in the 3'-5' direction.. It carries out the reaction ATP + H2O = ADP + phosphate + H(+). DNA helicase that plays an important role in DNA replication, transcription and repair. Binds to the RNA polymerase II subunit POLR2A during transcription elongation and suppresses transcription-associated genomic instability. Also associates with POLR1A and enforces the stability of ribosomal DNA arrays. Plays an important role in mitotic chromosome separation after cross-over events and cell cycle progress. Mechanistically, removes RAD51 filaments protecting stalled replication forks at common fragile sites and stimulates MUS81-EME1 endonuclease leading to mitotic DNA synthesis. Required for efficient DNA repair, including repair of inter-strand cross-links. Stimulates DNA decatenation mediated by TOP2A. Prevents sister chromatid exchange and homologous recombination. This is ATP-dependent DNA helicase Q5 (Recql5) from Mus musculus (Mouse).